Here is a 449-residue protein sequence, read N- to C-terminus: GTPase Der (449 aa).

2 EngA-type G domains span residues 3–167 and 178–351; these read AVIA…PTSE and PRIA…IDSR. Residues 9–16, 56–60, 119–122, 184–191, 231–235, and 296–299 contribute to the GTP site; these read GRPNVGKS, DTGGF, NKMD, DTAGM, and NKWD. A KH-like domain is found at 352-436; sequence RHFSTAELNR…PLRLVFRQGE (85 aa).

This sequence belongs to the TRAFAC class TrmE-Era-EngA-EngB-Septin-like GTPase superfamily. EngA (Der) GTPase family. In terms of assembly, associates with the 50S ribosomal subunit.

Its function is as follows. GTPase that plays an essential role in the late steps of ribosome biogenesis. This Acidithiobacillus ferrooxidans (strain ATCC 23270 / DSM 14882 / CIP 104768 / NCIMB 8455) (Ferrobacillus ferrooxidans (strain ATCC 23270)) protein is GTPase Der.